A 557-amino-acid polypeptide reads, in one-letter code: Urocanate hydratase (557 aa).

Residues 53-54, glutamine 131, 177-179, glutamate 197, arginine 202, 243-244, 264-268, 274-275, and tyrosine 323 contribute to the NAD(+) site; these read GG, GMG, NA, QTSAH, and YL. The active site involves cysteine 411. Residues 445–464 form a disordered region; sequence LDSGSVSSPNRETESMRDGS. Basic and acidic residues predominate over residues 455–464; the sequence is RETESMRDGS. Glycine 493 serves as a coordination point for NAD(+).

The protein belongs to the urocanase family. Requires NAD(+) as cofactor.

It is found in the cytoplasm. It carries out the reaction 4-imidazolone-5-propanoate = trans-urocanate + H2O. Its pathway is amino-acid degradation; L-histidine degradation into L-glutamate; N-formimidoyl-L-glutamate from L-histidine: step 2/3. In terms of biological role, catalyzes the conversion of urocanate to 4-imidazolone-5-propionate. This Pseudomonas putida (strain W619) protein is Urocanate hydratase.